A 358-amino-acid chain; its full sequence is Dual-specificity RNA methyltransferase RlmN (358 aa).

E91 functions as the Proton acceptor in the catalytic mechanism. Residues 102–337 (GNIRITQCLS…TILRKSKGQD (236 aa)) enclose the Radical SAM core domain. Residues C109 and C342 are joined by a disulfide bond. 3 residues coordinate [4Fe-4S] cluster: C116, C120, and C123. Residues 169–170 (GE), S201, 223–225 (SLH), and N299 each bind S-adenosyl-L-methionine. C342 serves as the catalytic S-methylcysteine intermediate.

It belongs to the radical SAM superfamily. RlmN family. Requires [4Fe-4S] cluster as cofactor.

It localises to the cytoplasm. The enzyme catalyses adenosine(2503) in 23S rRNA + 2 reduced [2Fe-2S]-[ferredoxin] + 2 S-adenosyl-L-methionine = 2-methyladenosine(2503) in 23S rRNA + 5'-deoxyadenosine + L-methionine + 2 oxidized [2Fe-2S]-[ferredoxin] + S-adenosyl-L-homocysteine. It carries out the reaction adenosine(37) in tRNA + 2 reduced [2Fe-2S]-[ferredoxin] + 2 S-adenosyl-L-methionine = 2-methyladenosine(37) in tRNA + 5'-deoxyadenosine + L-methionine + 2 oxidized [2Fe-2S]-[ferredoxin] + S-adenosyl-L-homocysteine. Specifically methylates position 2 of adenine 2503 in 23S rRNA and position 2 of adenine 37 in tRNAs. m2A2503 modification seems to play a crucial role in the proofreading step occurring at the peptidyl transferase center and thus would serve to optimize ribosomal fidelity. In Lawsonia intracellularis (strain PHE/MN1-00), this protein is Dual-specificity RNA methyltransferase RlmN.